Here is a 290-residue protein sequence, read N- to C-terminus: Phosphatidylglycerol--prolipoprotein diacylglyceryl transferase (290 aa).

Transmembrane regions (helical) follow at residues 21–41 (VSLHWYGLMYLVGFVFAMWLA), 60–80 (LLYAGFLGVFLGGRIGYVLFY), 98–118 (GGMSFHGGLIGVIVVMLWFAH), 124–144 (FFQVADFVAPMVPFGLGAGRL), 198–218 (SQLYEMLLEGVVLFIILNLFI), 224–244 (IGSVSGLFLICYGAFRILVEF), and 258–278 (VISMGQILSLPMILAGVIMMA). R143 contacts a 1,2-diacyl-sn-glycero-3-phospho-(1'-sn-glycerol).

It belongs to the Lgt family.

Its subcellular location is the cell inner membrane. It carries out the reaction L-cysteinyl-[prolipoprotein] + a 1,2-diacyl-sn-glycero-3-phospho-(1'-sn-glycerol) = an S-1,2-diacyl-sn-glyceryl-L-cysteinyl-[prolipoprotein] + sn-glycerol 1-phosphate + H(+). It participates in protein modification; lipoprotein biosynthesis (diacylglyceryl transfer). Its function is as follows. Catalyzes the transfer of the diacylglyceryl group from phosphatidylglycerol to the sulfhydryl group of the N-terminal cysteine of a prolipoprotein, the first step in the formation of mature lipoproteins. The chain is Phosphatidylglycerol--prolipoprotein diacylglyceryl transferase from Sodalis glossinidius (strain morsitans).